A 261-amino-acid chain; its full sequence is DNA oxidative demethylase ALKBH2 (261 aa).

The disordered stretch occupies residues 1–57 (MDRFLVKGAQGGLLRKQEEQEPTGEEPAVLGGDKESTRKRPRREAPGNGGHSAGPSW). The PCNA-binding motif lies at 3 to 7 (RFLVK). Residues 102–104 (FGK) and 122–124 (YTF) contribute to the substrate site. In terms of domain architecture, Fe2OG dioxygenase spans 152–257 (TFNFVLINRY…RVNLTFRKIL (106 aa)). 3 residues coordinate 2-oxoglutarate: asparagine 159, tyrosine 161, and histidine 171. Positions 171 and 173 each coordinate Fe cation. Residue aspartate 174 participates in substrate binding. Residues histidine 236, arginine 248, threonine 252, and arginine 254 each coordinate 2-oxoglutarate. Residue histidine 236 participates in Fe cation binding.

Belongs to the alkB family. As to quaternary structure, interacts with PCNA homotrimer; this interaction is enhanced during the S-phase of the cell cycle. Interacts with nucleolar proteins NCL, UBTF and NPM1. Interacts with XRCC5-XRCC6 heterodimer. Requires Fe(2+) as cofactor. In terms of tissue distribution, detected in colon, small intestine, ovary, testis, prostate, skeletal muscle, heart, liver and urinary bladder.

The protein localises to the nucleus. Its subcellular location is the nucleolus. It localises to the nucleoplasm. The enzyme catalyses a methylated nucleobase within DNA + 2-oxoglutarate + O2 = a nucleobase within DNA + formaldehyde + succinate + CO2. The catalysed reaction is an N(1)-methyl-2'-deoxyadenosine in double-stranded DNA + 2-oxoglutarate + O2 = a 2'-deoxyadenosine in double-stranded DNA + formaldehyde + succinate + CO2 + H(+). It carries out the reaction an N(1)-methyl-2'-deoxyadenosine in single-stranded DNA + 2-oxoglutarate + O2 = a 2'-deoxyadenosine in single-stranded DNA + formaldehyde + succinate + CO2 + H(+). It catalyses the reaction an N(3)-methyl-2'-deoxycytidine in double-stranded DNA + 2-oxoglutarate + O2 = a 2'-deoxycytidine in double-stranded DNA + formaldehyde + succinate + CO2 + H(+). The enzyme catalyses an N(3)-methyl-2'-deoxycytidine in single-stranded DNA + 2-oxoglutarate + O2 = a 2'-deoxycytidine in single-stranded DNA + formaldehyde + succinate + CO2 + H(+). The catalysed reaction is a 1,N(6)-etheno-2'-deoxyadenosine in double-stranded DNA + 2-oxoglutarate + O2 + H2O = a 2'-deoxyadenosine in double-stranded DNA + glyoxal + succinate + CO2. It carries out the reaction a 1,N(6)-etheno-2'-deoxyadenosine in single-stranded DNA + 2-oxoglutarate + O2 + H2O = a 2'-deoxyadenosine in single-stranded DNA + glyoxal + succinate + CO2. It catalyses the reaction a 3,N(4)-etheno-2'-deoxycytidine in double-stranded DNA + 2-oxoglutarate + O2 + H2O = a 2'-deoxycytidine in double-stranded DNA + glyoxal + succinate + CO2. The enzyme catalyses a 3,N(4)-etheno-2'-deoxycytidine in single-stranded DNA + 2-oxoglutarate + O2 + H2O = a 2'-deoxycytidine in single-stranded DNA + glyoxal + succinate + CO2. The catalysed reaction is a 1,N(2)-etheno-2'-deoxyguanosine in double-stranded DNA + 2-oxoglutarate + O2 + H2O = a 2'-deoxyguanosine in double-stranded DNA + glyoxal + succinate + CO2. Activated by ascorbate and magnesium ions. In terms of biological role, dioxygenase that repairs alkylated nucleic acid bases by direct reversal oxidative dealkylation. Can process both double-stranded (ds) and single-stranded (ss) DNA substrates, with a strong preference for dsDNA. Uses molecular oxygen, 2-oxoglutarate and iron as cofactors to oxidize the alkyl groups that are subsequently released as aldehydes, regenerating the undamaged bases. Probes the base pair stability, locates a weakened base pair and flips the damaged base to accommodate the lesion in its active site for efficient catalysis. Repairs monoalkylated bases, specifically N1-methyladenine and N3-methylcytosine, as well as higher order alkyl adducts such as bases modified with exocyclic bridged adducts known as etheno adducts including 1,N6-ethenoadenine, 3,N4-ethenocytosine and 1,N2-ethenoguanine. Acts as a gatekeeper of genomic integrity under alkylation stress. Efficiently repairs alkylated lesions in ribosomal DNA (rDNA). These lesions can cause ss- and dsDNA strand breaks that severely impair rDNA transcription. In a response mechanism to DNA damage, associates with PCNA at replication forks to repair alkylated adducts prior to replication. The chain is DNA oxidative demethylase ALKBH2 (ALKBH2) from Homo sapiens (Human).